Here is a 1402-residue protein sequence, read N- to C-terminus: Erbin (1402 aa).

LRR repeat units follow at residues 23–44, 47–68, 70–91, 93–114, 116–137, 139–161, 162–183, 185–206, 208–229, 231–252, 254–275, 277–298, 300–321, 323–344, 346–367, 369–391, and 392–413; these read TVTT…IFTF, TLEE…LFNC, SLHK…IANL, NLRE…IKNC, VLTI…FSQL, NLTQ…GRLT, KLQI…MNRL, QLER…LEQL, GLRE…IGSL, QLTY…ISTC, NLQD…IGSL, NVTT…IGGL, SIEE…IGQL, NMRT…IGNW, NITV…MGDM, KLKV…TKLQ, and QLTA…QKET. Phosphoserine is present on residues Ser-440 and Ser-444. 2 disordered regions span residues 465 to 489 and 507 to 543; these read DEDK…PYPD and DEET…TTKS. Residues 470–480 are compositionally biased toward basic and acidic residues; it reads EREAPPREGNL. Tyr-483 bears the Phosphotyrosine mark. At Thr-485 the chain carries Phosphothreonine. The segment covering 507 to 534 has biased composition (basic and acidic residues); the sequence is DEETNEESGRDLKQHEDQQVVNKDKCVK. 4 positions are modified to phosphoserine: Ser-595, Ser-599, Ser-600, and Ser-617. Positions 629–638 are enriched in basic and acidic residues; the sequence is NKKDDAKDAD. Positions 629 to 694 are disordered; it reads NKKDDAKDAD…PVDSNSKVRQ (66 aa). The span at 647–659 shows a compositional bias: low complexity; the sequence is NSNQNNSNCSSPS. Positions 660–689 are enriched in polar residues; that stretch reads RMSDSVSLNTDSSQDTSLCSPVKQTPVDSN. Phosphoserine occurs at positions 712, 849, 854, and 869. The segment at 824–864 is disordered; that stretch reads EDTAPSPGRVEPQKASSSADVGISKSTEDLSPQRSGPTGAV. Thr-914 is modified (phosphothreonine). Tyr-917 bears the Phosphotyrosine mark. Ser-928 is subject to Phosphoserine. Residue Tyr-970 is modified to Phosphotyrosine. Disordered regions lie at residues 990–1018 and 1070–1093; these read WHPK…ENHS and TTIQ…TRRT. The segment covering 1070 to 1084 has biased composition (polar residues); the sequence is TTIQRQSSVSSTASV. Tyr-1097 is subject to Phosphotyrosine. Disordered stretches follow at residues 1107-1187, 1198-1217, and 1222-1274; these read GRTP…VPHD, AKKL…CQDD, and EEQN…VARH. Polar residues-rich tracts occupy residues 1128 to 1139 and 1149 to 1164; these read GPNTSRPQSARP and MSVS…PSKR. A phosphoserine mark is found at Ser-1150 and Ser-1171. Phosphoserine occurs at positions 1231, 1234, and 1276. Residues 1311 to 1400 enclose the PDZ domain; it reads EIRVRVEKDP…AVDLIIVREV (90 aa).

Belongs to the LAP (LRR and PDZ) protein family. Interacts with ERBB2, BPAG1 and ITGB4. May favor the localization of ERBB2, by restricting its presence to the basolateral membrane of epithelial cells. Also found to interact with ARVCF and delta catenin. Interacts (via C-terminus) with DST (via N-terminus). Interacts with NOD2 (via CARD domain). In terms of processing, isoform 2 is phosphorylated on Ser-1231 and Ser-1234.

It localises to the cell junction. The protein resides in the hemidesmosome. The protein localises to the nucleus membrane. Its subcellular location is the basolateral cell membrane. Functionally, acts as an adapter for the receptor ERBB2, in epithelia. By binding the unphosphorylated ERBB2 'Tyr-1248' receptor, it may contribute to stabilize this unphosphorylated state. Inhibits NOD2-dependent NF-kappa-B signaling and pro-inflammatory cytokine secretion. This Mus musculus (Mouse) protein is Erbin.